We begin with the raw amino-acid sequence, 227 residues long: Cytidylate kinase (227 aa).

12-20 lines the ATP pocket; that stretch reads GPSGAGKGT.

It belongs to the cytidylate kinase family. Type 1 subfamily.

Its subcellular location is the cytoplasm. The catalysed reaction is CMP + ATP = CDP + ADP. It carries out the reaction dCMP + ATP = dCDP + ADP. The protein is Cytidylate kinase of Salmonella choleraesuis (strain SC-B67).